Consider the following 313-residue polypeptide: Ornithine carbamoyltransferase (313 aa).

Residues 57–60, Arg-108, and 135–138 each bind carbamoyl phosphate; these read STRT and HPTQ. L-ornithine is bound by residues Asn-167, Asp-231, and 235 to 236; that span reads SM. Carbamoyl phosphate-binding positions include 272–273 and Arg-300; that span reads CL.

The protein belongs to the aspartate/ornithine carbamoyltransferase superfamily. OTCase family.

The protein localises to the cytoplasm. It carries out the reaction carbamoyl phosphate + L-ornithine = L-citrulline + phosphate + H(+). The protein operates within amino-acid biosynthesis; L-arginine biosynthesis; L-arginine from L-ornithine and carbamoyl phosphate: step 1/3. Its function is as follows. Reversibly catalyzes the transfer of the carbamoyl group from carbamoyl phosphate (CP) to the N(epsilon) atom of ornithine (ORN) to produce L-citrulline. This chain is Ornithine carbamoyltransferase, found in Thermotoga maritima (strain ATCC 43589 / DSM 3109 / JCM 10099 / NBRC 100826 / MSB8).